The primary structure comprises 344 residues: Selenide, water dikinase (344 aa).

The active site involves C16. ATP is bound by residues K19 and 47–49 (SRD). Position 50 (D50) interacts with Mg(2+). ATP-binding positions include D67, D90, and 138-140 (GHS). D90 is a Mg(2+) binding site. Mg(2+) is bound at residue D226.

Belongs to the selenophosphate synthase 1 family. Class I subfamily. Homodimer. It depends on Mg(2+) as a cofactor.

It catalyses the reaction hydrogenselenide + ATP + H2O = selenophosphate + AMP + phosphate + 2 H(+). Functionally, synthesizes selenophosphate from selenide and ATP. The protein is Selenide, water dikinase of Bordetella bronchiseptica (strain ATCC BAA-588 / NCTC 13252 / RB50) (Alcaligenes bronchisepticus).